Here is a 277-residue protein sequence, read N- to C-terminus: Trypsin-2 (277 aa).

The first 19 residues, Met-1–Cys-19, serve as a signal peptide directing secretion. Positions Ala-20 to Arg-50 are cleaved as a propeptide — activation peptide. The Peptidase S1 domain occupies Val-51 to Gly-276. An intrachain disulfide couples Cys-76 to Cys-92. Catalysis depends on charge relay system residues His-91 and Asp-136. Cystine bridges form between Cys-201-Cys-217 and Cys-228-Cys-252. Ser-232 functions as the Charge relay system in the catalytic mechanism.

Belongs to the peptidase S1 family. In terms of tissue distribution, midgut.

Its subcellular location is the secreted. The enzyme catalyses Preferential cleavage: Arg-|-Xaa, Lys-|-Xaa.. Major function may be to aid in digestion of the blood meal. The protein is Trypsin-2 (TRYP2) of Anopheles gambiae (African malaria mosquito).